Consider the following 131-residue polypeptide: Aspartate 1-decarboxylase (131 aa).

Ser-25 serves as the catalytic Schiff-base intermediate with substrate; via pyruvic acid. Ser-25 is modified (pyruvic acid (Ser)). Thr-57 lines the substrate pocket. The active-site Proton donor is Tyr-58. 73 to 75 (GAA) provides a ligand contact to substrate.

Belongs to the PanD family. In terms of assembly, heterooctamer of four alpha and four beta subunits. Requires pyruvate as cofactor. Post-translationally, is synthesized initially as an inactive proenzyme, which is activated by self-cleavage at a specific serine bond to produce a beta-subunit with a hydroxyl group at its C-terminus and an alpha-subunit with a pyruvoyl group at its N-terminus.

It localises to the cytoplasm. It catalyses the reaction L-aspartate + H(+) = beta-alanine + CO2. It participates in cofactor biosynthesis; (R)-pantothenate biosynthesis; beta-alanine from L-aspartate: step 1/1. Catalyzes the pyruvoyl-dependent decarboxylation of aspartate to produce beta-alanine. In Anaeromyxobacter sp. (strain K), this protein is Aspartate 1-decarboxylase.